A 100-amino-acid chain; its full sequence is MDNTNRLRHLRSRKQSKFTLGDTAEVNSVKWEFINMTEQEEDLIFRMHRLVGDRWDLIAGRVVGREAKDIERYWIMRNCDHCSHKRRRVHKFYRFSISPP.

Residues 37–74 (TEQEEDLIFRMHRLVGDRWDLIAGRVVGREAKDIERYW) enclose the Myb-like domain.

In terms of assembly, interacts with GL3. Expressed in cotyledons, petioles, rosette leaves, hydathodes, cauline leaves, stems, pedicels and flower buds.

The protein resides in the nucleus. MYB-type transcription factor involved in trichome cell specification. Acts as a negative regulator of trichome patterning and formation. May function by suppressing the expression of GL3. This chain is MYB-like transcription factor TCL2 (TCL2), found in Arabidopsis thaliana (Mouse-ear cress).